Reading from the N-terminus, the 282-residue chain is Protease HtpX homolog (282 aa).

The next 2 helical transmembrane spans lie at 6-26 and 29-49; these read TLVL…LIGG and GATF…FFSH. Position 130 (H130) interacts with Zn(2+). The active site involves E131. H134 is a Zn(2+) binding site. 2 helical membrane passes run 140 to 160 and 180 to 200; these read ILIS…AQMA and IVAL…QLAI. Residue E205 participates in Zn(2+) binding.

Belongs to the peptidase M48B family. Zn(2+) serves as cofactor.

It localises to the cell inner membrane. This Thermodesulfovibrio yellowstonii (strain ATCC 51303 / DSM 11347 / YP87) protein is Protease HtpX homolog.